The sequence spans 738 residues: NADH dehydrogenase [ubiquinone] iron-sulfur protein 1, mitochondrial (738 aa).

The N-terminal 27 residues, 1–27 (MGLGLLASRALRSSRIIRNSTRTIVST), are a transit peptide targeting the mitochondrion. Positions 66–144 (DVIEVFVDGY…GMKIKTDTPI (79 aa)) constitute a 2Fe-2S ferredoxin-type domain. [2Fe-2S] cluster contacts are provided by Cys-100, Cys-111, Cys-114, and Cys-128. In terms of domain architecture, 4Fe-4S His(Cys)3-ligated-type spans 144–183 (IAKKAREGVMEFLLMNHPLDCPICDQGGECDLQDQSMAFG). Residues His-160, Cys-164, Cys-167, Cys-173, Cys-212, Cys-215, Cys-218, and Cys-262 each coordinate [4Fe-4S] cluster. Residues 281-337 (LKGTESIDVTDAVGSNIRIDSRGPEVMRVVPRLNEDINEEWISDKTRFFYDGLKRQR) form the 4Fe-4S Mo/W bis-MGD-type domain.

Belongs to the complex I 75 kDa subunit family. As to quaternary structure, complex I is composed of about 45 different subunits. This is a component of the iron-sulfur (IP) fragment of the enzyme. The cofactor is [2Fe-2S] cluster. Requires [4Fe-4S] cluster as cofactor.

It is found in the mitochondrion inner membrane. The enzyme catalyses a ubiquinone + NADH + 5 H(+)(in) = a ubiquinol + NAD(+) + 4 H(+)(out). Its function is as follows. Core subunit of the mitochondrial membrane respiratory chain NADH dehydrogenase (Complex I) that is believed to belong to the minimal assembly required for catalysis. Complex I functions in the transfer of electrons from NADH to the respiratory chain. The immediate electron acceptor for the enzyme is believed to be ubiquinone. This is the largest subunit of complex I and it is a component of the iron-sulfur (IP) fragment of the enzyme. It may form part of the active site crevice where NADH is oxidized. This is NADH dehydrogenase [ubiquinone] iron-sulfur protein 1, mitochondrial from Solanum tuberosum (Potato).